The sequence spans 408 residues: Succinylornithine transaminase (408 aa).

At K252 the chain carries N6-(pyridoxal phosphate)lysine.

Belongs to the class-III pyridoxal-phosphate-dependent aminotransferase family. AstC subfamily. It depends on pyridoxal 5'-phosphate as a cofactor.

It catalyses the reaction N(2)-succinyl-L-ornithine + 2-oxoglutarate = N-succinyl-L-glutamate 5-semialdehyde + L-glutamate. It participates in amino-acid degradation; L-arginine degradation via AST pathway; L-glutamate and succinate from L-arginine: step 3/5. Functionally, catalyzes the transamination of N(2)-succinylornithine and alpha-ketoglutarate into N(2)-succinylglutamate semialdehyde and glutamate. Can also act as an acetylornithine aminotransferase. In Salmonella paratyphi B (strain ATCC BAA-1250 / SPB7), this protein is Succinylornithine transaminase.